We begin with the raw amino-acid sequence, 152 residues long: MGLSNKFKSFFFLDEEEEYYEEEVAREPEPMQKKTKKEKPSKNRFYAVEEEDAKVVSMQGAQYSSRMVLAEPRVYAEAQELADYLKDYKTVVVNLQRISHDQATRIVDFLSGTVYALGGDIQRVGNNIFLCTPDNVEVNGSISEMLDEQNFM.

The segment covering Glu-23 to Gln-32 has biased composition (basic and acidic residues). Residues Glu-23 to Lys-42 are disordered.

It belongs to the SepF family. As to quaternary structure, homodimer. Interacts with FtsZ.

Its subcellular location is the cytoplasm. In terms of biological role, cell division protein that is part of the divisome complex and is recruited early to the Z-ring. Probably stimulates Z-ring formation, perhaps through the cross-linking of FtsZ protofilaments. Its function overlaps with FtsA. The chain is Cell division protein SepF from Listeria welshimeri serovar 6b (strain ATCC 35897 / DSM 20650 / CCUG 15529 / CIP 8149 / NCTC 11857 / SLCC 5334 / V8).